The following is a 422-amino-acid chain: L-threonine dehydratase biosynthetic IlvA (422 aa).

K56 bears the N6-(pyridoxal phosphate)lysine mark. Pyridoxal 5'-phosphate contacts are provided by residues N83, 189 to 193 (GGGGL), and S315. Residues 339 to 413 (HYFILNFPQR…FDPSNIYINE (75 aa)) form the ACT-like domain.

It belongs to the serine/threonine dehydratase family. As to quaternary structure, homotetramer. The cofactor is pyridoxal 5'-phosphate.

The catalysed reaction is L-threonine = 2-oxobutanoate + NH4(+). The protein operates within amino-acid biosynthesis; L-isoleucine biosynthesis; 2-oxobutanoate from L-threonine: step 1/1. Catalyzes the anaerobic formation of alpha-ketobutyrate and ammonia from threonine in a two-step reaction. The first step involved a dehydration of threonine and a production of enamine intermediates (aminocrotonate), which tautomerizes to its imine form (iminobutyrate). Both intermediates are unstable and short-lived. The second step is the nonenzymatic hydrolysis of the enamine/imine intermediates to form 2-ketobutyrate and free ammonia. In the low water environment of the cell, the second step is accelerated by RidA. The polypeptide is L-threonine dehydratase biosynthetic IlvA (ilvA) (Staphylococcus aureus (strain NCTC 8325 / PS 47)).